The primary structure comprises 233 residues: Aspartate/glutamate leucyltransferase (233 aa).

Belongs to the R-transferase family. Bpt subfamily.

It is found in the cytoplasm. It catalyses the reaction N-terminal L-glutamyl-[protein] + L-leucyl-tRNA(Leu) = N-terminal L-leucyl-L-glutamyl-[protein] + tRNA(Leu) + H(+). It carries out the reaction N-terminal L-aspartyl-[protein] + L-leucyl-tRNA(Leu) = N-terminal L-leucyl-L-aspartyl-[protein] + tRNA(Leu) + H(+). Functions in the N-end rule pathway of protein degradation where it conjugates Leu from its aminoacyl-tRNA to the N-termini of proteins containing an N-terminal aspartate or glutamate. The chain is Aspartate/glutamate leucyltransferase from Vibrio cholerae serotype O1 (strain ATCC 39315 / El Tor Inaba N16961).